The sequence spans 468 residues: 23S rRNA (uracil(1939)-C(5))-methyltransferase RlmD (468 aa).

The TRAM domain maps to 12 to 70; the sequence is SKQLSPKLSLNVTQLDHLGAGMAQHQGKVVFIPQALPGERVSVQLTDQKKSFAKAKLIK. 4 residues coordinate [4Fe-4S] cluster: Cys83, Cys89, Cys92, and Cys174. Residues Gln296, Phe325, Asn330, Glu351, Asp378, and Asp398 each contribute to the S-adenosyl-L-methionine site. The active-site Nucleophile is Cys424.

The protein belongs to the class I-like SAM-binding methyltransferase superfamily. RNA M5U methyltransferase family. RlmD subfamily.

It carries out the reaction uridine(1939) in 23S rRNA + S-adenosyl-L-methionine = 5-methyluridine(1939) in 23S rRNA + S-adenosyl-L-homocysteine + H(+). Functionally, catalyzes the formation of 5-methyl-uridine at position 1939 (m5U1939) in 23S rRNA. The polypeptide is 23S rRNA (uracil(1939)-C(5))-methyltransferase RlmD (Shewanella denitrificans (strain OS217 / ATCC BAA-1090 / DSM 15013)).